Consider the following 926-residue polypeptide: Up-regulator of cell proliferation (926 aa).

Residue Ser3 is modified to Phosphoserine. A VLIG-type G domain is found at 689–924 (RSRLVVLSAL…NIQQLIELLR (236 aa)).

This sequence belongs to the TRAFAC class dynamin-like GTPase superfamily. Very large inducible GTPase (VLIG) family.

Its subcellular location is the cytoplasm. It localises to the nucleus. In terms of biological role, may be involved in cell cycle progression through the regulation of cyclin D1 expression. The polypeptide is Up-regulator of cell proliferation (Urgcp) (Mus musculus (Mouse)).